A 156-amino-acid chain; its full sequence is Small ribosomal subunit protein uS7 (156 aa).

It belongs to the universal ribosomal protein uS7 family. Part of the 30S ribosomal subunit. Contacts proteins S9 and S11.

In terms of biological role, one of the primary rRNA binding proteins, it binds directly to 16S rRNA where it nucleates assembly of the head domain of the 30S subunit. Is located at the subunit interface close to the decoding center, probably blocks exit of the E-site tRNA. This chain is Small ribosomal subunit protein uS7, found in Mycobacteroides abscessus (strain ATCC 19977 / DSM 44196 / CCUG 20993 / CIP 104536 / JCM 13569 / NCTC 13031 / TMC 1543 / L948) (Mycobacterium abscessus).